The primary structure comprises 223 residues: MESGAYGVAEAGGSFDLRPFLTQPQVVARALCLVFALIVFSCIYGEGYSNTHKSKQMYCVFNHNEDACRYGSAIGVLAFLASAFLVVDAYFPQISNATDRKYLVIGDLLFSALWTFLWFVGFCFLTNQWAVTDPEDVLVGADSARAAITFSFFSIFSWGVLASLTYQRYKAGVDDFIQNYVDPSPDPNTAYASYPGASVDNYQQPPFTQNAETTEGYQPPPVY.

N-acetylmethionine is present on methionine 1. Serine 3 carries the phosphoserine modification. The MARVEL domain occupies 20-170; that stretch reads FLTQPQVVAR…LASLTYQRYK (151 aa). Transmembrane regions (helical) follow at residues 26–46, 71–91, 104–124, and 146–166; these read VVAR…IYGE, GSAI…DAYF, VIGD…GFCF, and AAIT…SLTY. Positions 197 to 223 are disordered; sequence ASVDNYQQPPFTQNAETTEGYQPPPVY. Positions 200–216 are enriched in polar residues; sequence DNYQQPPFTQNAETTEG.

It belongs to the synaptogyrin family.

It localises to the membrane. The sequence is that of Putative synaptogyrin-2 like protein from Homo sapiens (Human).